A 60-amino-acid polypeptide reads, in one-letter code: DNA-directed RNA polymerase subunit Rpo6 (60 aa).

This sequence belongs to the archaeal Rpo6/eukaryotic RPB6 RNA polymerase subunit family. In terms of assembly, part of the RNA polymerase complex.

The protein localises to the cytoplasm. It carries out the reaction RNA(n) + a ribonucleoside 5'-triphosphate = RNA(n+1) + diphosphate. Its function is as follows. DNA-dependent RNA polymerase (RNAP) catalyzes the transcription of DNA into RNA using the four ribonucleoside triphosphates as substrates. The sequence is that of DNA-directed RNA polymerase subunit Rpo6 from Halobacterium salinarum (strain ATCC 700922 / JCM 11081 / NRC-1) (Halobacterium halobium).